We begin with the raw amino-acid sequence, 130 residues long: Small ribosomal subunit protein uS8 (130 aa).

The protein belongs to the universal ribosomal protein uS8 family. As to quaternary structure, part of the 30S ribosomal subunit. Contacts proteins S5 and S12.

In terms of biological role, one of the primary rRNA binding proteins, it binds directly to 16S rRNA central domain where it helps coordinate assembly of the platform of the 30S subunit. The sequence is that of Small ribosomal subunit protein uS8 from Shewanella sp. (strain MR-7).